Reading from the N-terminus, the 230-residue chain is Large ribosomal subunit protein uL1 (230 aa).

This sequence belongs to the universal ribosomal protein uL1 family. As to quaternary structure, part of the 50S ribosomal subunit.

Binds directly to 23S rRNA. The L1 stalk is quite mobile in the ribosome, and is involved in E site tRNA release. In terms of biological role, protein L1 is also a translational repressor protein, it controls the translation of the L11 operon by binding to its mRNA. This chain is Large ribosomal subunit protein uL1, found in Leptospira biflexa serovar Patoc (strain Patoc 1 / Ames).